The chain runs to 283 residues: TIMELESS-interacting protein (283 aa).

The segment at 1 to 68 (MAMIDPLENN…SSSAARKAVK (68 aa)) is disordered. A compositionally biased stretch (acidic residues) spans 15–24 (PDYENTEDET). The interaction with TIMELESS stretch occupies residues 74–150 (LDANRLVSER…KEVQTCLKRI (77 aa)). Disordered stretches follow at residues 186–205 (GNVG…EQQQ) and 217–238 (RRQA…PSYP).

The protein belongs to the CSM3 family. In terms of assembly, interacts with TIMELESS, which impairs TIMELESS self-association.

It is found in the cytoplasm. Its subcellular location is the nucleus. Plays an important role in the control of DNA replication and the maintenance of replication fork stability. Important for cell survival after DNA damage or replication stress. May be required for the replication checkpoint induced by hydroxyurea or ultraviolet light. This is TIMELESS-interacting protein (TIPIN) from Gallus gallus (Chicken).